Reading from the N-terminus, the 132-residue chain is D-ribose pyranase (132 aa).

H20 (proton donor) is an active-site residue. Substrate is bound by residues D28, H99, and 121-123 (YSN).

This sequence belongs to the RbsD / FucU family. RbsD subfamily. Homodecamer.

Its subcellular location is the cytoplasm. It carries out the reaction beta-D-ribopyranose = beta-D-ribofuranose. The protein operates within carbohydrate metabolism; D-ribose degradation; D-ribose 5-phosphate from beta-D-ribopyranose: step 1/2. In terms of biological role, catalyzes the interconversion of beta-pyran and beta-furan forms of D-ribose. The sequence is that of D-ribose pyranase from Pseudomonas putida (strain GB-1).